Reading from the N-terminus, the 360-residue chain is CLIP domain-containing serine protease B4 (360 aa).

The first 24 residues, 1–24 (MIGNRVINLLIVATLALAGQTVLA), serve as a signal peptide directing secretion. One can recognise a Clip domain in the interval 30–83 (DCVNPVGEAGKCVLFRECQPLVDIYNKPVNTPDDTQFLTESRCGLYERKTLVCC). 4 cysteine pairs are disulfide-bonded: Cys-31/Cys-82, Cys-41/Cys-72, Cys-47/Cys-83, and Cys-138/Cys-154. The 253-residue stretch at 108–360 (VIGGQPTKID…YVDWIKDNIY (253 aa)) folds into the Peptidase S1 domain. Active-site charge relay system residues include His-153 and Asp-213. N-linked (GlcNAc...) asparagine glycosylation occurs at Asn-224. 2 disulfides stabilise this stretch: Cys-280-Cys-297 and Cys-307-Cys-336. Ser-311 functions as the Charge relay system in the catalytic mechanism.

This sequence belongs to the peptidase S1 family. CLIP subfamily. Interacts with SRPN2 in the hemolymph of immune-challenged female mosquitoes; the interaction results in CLIPB4 inhibition. As to expression, in females, expressed in fat body, cuticle, thorax and ovaries.

The protein localises to the secreted. In terms of biological role, serine protease which plays a role in the innate immune response against protozoan and bacterial pathogens, such as Plasmodium bergei, Staphylococcus aureus, Micrococcus luteus and Escherichia coli, by activating the melanization cascade. Cleaves and activates CLIPB8. In the resistant strain L3-5, involved in the melanization of killed parasite P.berghei ookinetes which results in their clearance. In the susceptible strain G3, appears to be dispensable for ookinete elimination which occurs by lysis. This is CLIP domain-containing serine protease B4 from Anopheles gambiae (African malaria mosquito).